The following is a 429-amino-acid chain: Apolipoprotein A-IV (429 aa).

Residues 1–20 (MFLKAVVLTLALVAVTGARA) form the signal peptide. 13 repeat units span residues 33-54 (DYFS…KSEL), 60-81 (ALFQ…KKLV), 82-103 (PFAT…EEIR), 115-136 (PHAN…QRLE), 137-158 (PYTD…RQLT), 159-180 (PYAQ…TSLR), 181-202 (PHAD…ERLT), 203-224 (PYAD…RSLA), 225-246 (PYAQ…FQMK), 247-268 (KNAE…QRLA), 269-286 (PLAE…EGLQ), 287-308 (KSLA…LRVE), and 309-330 (PYGE…QKLG). Positions 33–330 (DYFSQLSSNA…QMEQLRQKLG (298 aa)) are 13 X 22 AA approximate tandem repeats. The segment at 359 to 429 (KEKESQDNTL…QVQMLAPLES (71 aa)) is disordered. Over residues 381-420 (QEQQQEQEQEQQQQQEQQQQQEQQREQQQQEQQQEQQQEQ) the composition is skewed to low complexity.

Belongs to the apolipoprotein A1/A4/E family. Homodimer. Post-translationally, phosphorylation sites are present in the extracellular medium. In terms of tissue distribution, secreted in plasma.

It localises to the secreted. In terms of biological role, may have a role in chylomicrons and VLDL secretion and catabolism. Required for efficient activation of lipoprotein lipase by ApoC-II; potent activator of LCAT. Apoa-IV is a major component of HDL and chylomicrons. This is Apolipoprotein A-IV (APOA4) from Macaca fascicularis (Crab-eating macaque).